Consider the following 238-residue polypeptide: Ribonuclease PH (238 aa).

Residues R86 and 124–126 (GTR) each bind phosphate.

This sequence belongs to the RNase PH family. In terms of assembly, homohexameric ring arranged as a trimer of dimers.

The enzyme catalyses tRNA(n+1) + phosphate = tRNA(n) + a ribonucleoside 5'-diphosphate. Its function is as follows. Phosphorolytic 3'-5' exoribonuclease that plays an important role in tRNA 3'-end maturation. Removes nucleotide residues following the 3'-CCA terminus of tRNAs; can also add nucleotides to the ends of RNA molecules by using nucleoside diphosphates as substrates, but this may not be physiologically important. Probably plays a role in initiation of 16S rRNA degradation (leading to ribosome degradation) during starvation. The protein is Ribonuclease PH of Geobacter sulfurreducens (strain ATCC 51573 / DSM 12127 / PCA).